Reading from the N-terminus, the 224-residue chain is DNA repair and recombination protein RadB (224 aa).

This sequence belongs to the eukaryotic RecA-like protein family. RadB subfamily.

Involved in DNA repair and in homologous recombination. May regulate the cleavage reactions of the branch-structured DNA. Has a very weak ATPase activity that is not stimulated by DNA. Binds DNA but does not promote DNA strands exchange. In Thermococcus onnurineus (strain NA1), this protein is DNA repair and recombination protein RadB.